The following is a 295-amino-acid chain: (R)-phenoxypropionate/alpha-ketoglutarate-dioxygenase (295 aa).

Fe cation-binding residues include histidine 111 and aspartate 113. Threonine 138 and tryptophan 255 together coordinate 2-oxoglutarate. Fe cation is bound at residue histidine 270. Arginine 281 is a binding site for 2-oxoglutarate.

It belongs to the TfdA dioxygenase family. Homotrimer. It depends on Fe cation as a cofactor. L-ascorbate is required as a cofactor.

It catalyses the reaction (R)-2-(4-chloro-2-methylphenoxy)propanoate + 2-oxoglutarate + O2 = 2-methyl-4-chlorophenol + pyruvate + succinate + CO2. The enzyme catalyses (R)-(2,4-dichlorophenoxy)propanoate + 2-oxoglutarate + O2 = 2,4-dichlorophenol + pyruvate + succinate + CO2. Its pathway is xenobiotic degradation; 2-(2,4-dichlorophenoxy)propanoate degradation. Its activity is regulated as follows. Inhibited by divalent cations, most significantly by copper and nickel, and by diethylpyrocarbonate (DEPC). Involved in the degradation of the phenoxypropionate herbicides. Catalyzes the enantiospecific cleavage of the ether bond in the herbicid R-dichlorprop ((R)-2-(2,4-dichlorophenoxy)propionate)(R-2,4-DP) and R-mecoprop ((R)-2-(4-chloro-2-methylphenoxy)propionate)(R-2,4-MCPP). It can also accept (RS)-2-(2,4,5-trichlorophenoxy)propionate, (RS)-2-(4-chlorophenoxy)propionate, (RS)-2-(m-chlorophenoxy)propionate, however it can only accept 2-oxoglutarate as oxygen acceptor. This Delftia acidovorans (Pseudomonas acidovorans) protein is (R)-phenoxypropionate/alpha-ketoglutarate-dioxygenase.